A 93-amino-acid chain; its full sequence is Large ribosomal subunit protein uL23cz/uL23cy (93 aa).

The protein belongs to the universal ribosomal protein uL23 family. As to quaternary structure, part of the 50S ribosomal subunit.

It localises to the plastid. The protein resides in the chloroplast. In terms of biological role, binds to 23S rRNA. This is Large ribosomal subunit protein uL23cz/uL23cy (rpl23-A) from Glycine max (Soybean).